The primary structure comprises 1217 residues: ATP-dependent helicase/nuclease subunit A (1217 aa).

Residues 10 to 475 (VIWTDAQWQS…IDLSQNFRSR (466 aa)) enclose the UvrD-like helicase ATP-binding domain. 31-38 (AAAGSGKT) lines the ATP pocket. Residues 476 to 786 (KEVLSTTNYI…RMMTIHSSKG (311 aa)) form the UvrD-like helicase C-terminal domain.

It belongs to the helicase family. AddA subfamily. Heterodimer of AddA and AddB/RexB. Requires Mg(2+) as cofactor.

It catalyses the reaction Couples ATP hydrolysis with the unwinding of duplex DNA by translocating in the 3'-5' direction.. The enzyme catalyses ATP + H2O = ADP + phosphate + H(+). Its function is as follows. The heterodimer acts as both an ATP-dependent DNA helicase and an ATP-dependent, dual-direction single-stranded exonuclease. Recognizes the chi site generating a DNA molecule suitable for the initiation of homologous recombination. The AddA nuclease domain is required for chi fragment generation; this subunit has the helicase and 3' -&gt; 5' nuclease activities. The polypeptide is ATP-dependent helicase/nuclease subunit A (Staphylococcus aureus (strain MW2)).